Reading from the N-terminus, the 225-residue chain is Type II restriction enzyme BslI subunit alpha (225 aa).

2 consecutive C4-type zinc fingers follow at residues Cys-36 to Cys-53 and Cys-63 to Cys-84.

In terms of assembly, heterotetramer of two alpha and two beta subunits. The alpha subunit is believed to be responsible for DNA recognition, while the beta subunit is thought to mediate cleavage. Zn(2+) is required as a cofactor.

The enzyme catalyses Endonucleolytic cleavage of DNA to give specific double-stranded fragments with terminal 5'-phosphates.. In terms of biological role, a P subtype restriction enzyme that recognizes the double-stranded sequence 5'-CCN(7)GG-3' and cleaves after N-7. The sequence is that of Type II restriction enzyme BslI subunit alpha from Bacillus sp. (strain NEB-606).